Here is a 177-residue protein sequence, read N- to C-terminus: Bifunctional protein PyrR (177 aa).

Positions Leu99 to Thr111 match the PRPP-binding motif.

This sequence belongs to the purine/pyrimidine phosphoribosyltransferase family. PyrR subfamily.

It catalyses the reaction UMP + diphosphate = 5-phospho-alpha-D-ribose 1-diphosphate + uracil. Regulates the transcription of the pyrimidine nucleotide (pyr) operon in response to exogenous pyrimidines. In terms of biological role, also displays a weak uracil phosphoribosyltransferase activity which is not physiologically significant. This chain is Bifunctional protein PyrR, found in Picosynechococcus sp. (strain ATCC 27264 / PCC 7002 / PR-6) (Agmenellum quadruplicatum).